The following is a 580-amino-acid chain: Rap guanine nucleotide exchange factor 5 (580 aa).

The 134-residue stretch at 67-200 folds into the N-terminal Ras-GEF domain; that stretch reads DRYVVVSGTP…ELKEFQKILG (134 aa). The Ras-GEF domain occupies 344-579; it reads NTWDLALELM…FELSHRLEPR (236 aa).

In the embryo, expressed in young neurons of the developing telencephalon, diencephalon and hindbrain. Not expressed in progenitor cells in the ventricular zone.

The protein resides in the nucleus. Functionally, guanine nucleotide exchange factor (GEF) for RAP1A, RAP2A and MRAS/M-Ras-GTP. Its association with MRAS inhibits Rap1 activation. The polypeptide is Rap guanine nucleotide exchange factor 5 (Rapgef5) (Rattus norvegicus (Rat)).